A 561-amino-acid polypeptide reads, in one-letter code: Arginine--tRNA ligase (561 aa).

Residues Pro-108–His-118 carry the 'HIGH' region motif.

It belongs to the class-I aminoacyl-tRNA synthetase family. Monomer.

The protein localises to the cytoplasm. It catalyses the reaction tRNA(Arg) + L-arginine + ATP = L-arginyl-tRNA(Arg) + AMP + diphosphate. The sequence is that of Arginine--tRNA ligase from Haemophilus ducreyi (strain 35000HP / ATCC 700724).